The primary structure comprises 340 residues: Methionine import ATP-binding protein MetN (340 aa).

In terms of domain architecture, ABC transporter spans 6-245 (IEFEGITKVF…PQTNVAKRFV (240 aa)). Residue 42 to 49 (GYSGAGKS) coordinates ATP.

This sequence belongs to the ABC transporter superfamily. Methionine importer (TC 3.A.1.24) family. As to quaternary structure, the complex is composed of two ATP-binding proteins (MetN), two transmembrane proteins (MetI) and a solute-binding protein (MetQ).

It is found in the cell membrane. The enzyme catalyses L-methionine(out) + ATP + H2O = L-methionine(in) + ADP + phosphate + H(+). The catalysed reaction is D-methionine(out) + ATP + H2O = D-methionine(in) + ADP + phosphate + H(+). Functionally, part of the ABC transporter complex MetNIQ involved in methionine import. Responsible for energy coupling to the transport system. This is Methionine import ATP-binding protein MetN from Corynebacterium diphtheriae (strain ATCC 700971 / NCTC 13129 / Biotype gravis).